A 674-amino-acid polypeptide reads, in one-letter code: Sodium/myo-inositol cotransporter 2 (674 aa).

At 1-27 (MESSTSSPQPPLSDPLDPFPQRSLEPG) the chain is on the extracellular side. Residues 28-48 (DIAVLVLYFLFVLAVGLWSTV) form a helical membrane-spanning segment. Residues 49–56 (KTKRDTVK) lie on the Cytoplasmic side of the membrane. A helical transmembrane segment spans residues 57–77 (GYFLAGGDMVWWPVGASLFAS). The Extracellular portion of the chain corresponds to 78-102 (NVGSGHFVGLAGSGAATGISVAAYE). The chain crosses the membrane as a helical span at residues 103–123 (FNGMFSVLMLAWIFLPIYIAG). At 124–140 (QVTTMPEYLRRRFGGSR) the chain is on the cytoplasmic side. A helical membrane pass occupies residues 141 to 161 (IAITLAVLYLFIYIFTKISVD). The Extracellular segment spans residues 162-180 (MYAGAIFIQQSLHLDLYLS). Residues 181-201 (VVGLLAVTALYTVAGGLAAVI) traverse the membrane as a helical segment. At 202 to 208 (YTDALQT) the chain is on the cytoplasmic side. The helical transmembrane segment at 209-229 (LIMLVGALTLMGYSFAAVGGM) threads the bilayer. Topologically, residues 230–272 (EGLQEKYFLALPSNRSENSSCGLPREDAFHLFRDPLTSDLPWP) are extracellular. The chain crosses the membrane as a helical span at residues 273–293 (GILFGMSIPSLWYWCTDQVIV). Residues 294-308 (QRSLAAKNLSHAKGG) lie on the Cytoplasmic side of the membrane. The helical transmembrane segment at 309-329 (SLMAAYLKVLPLFIMVFPGMV) threads the bilayer. Residues 330–375 (SRILFPDQVACADPETCQRVCNNPSGCSDIAYPKLVLELLPTGLRG) lie on the Extracellular side of the membrane. A helical transmembrane segment spans residues 376–396 (LMMAVMVAALMSSLTSIFNSA). Over 397–418 (STIFTMDLWNHVRPRASEKELM) the chain is Cytoplasmic. Residues 419 to 439 (IVGRVFVLLLVLVSVLWIPVV) form a helical membrane-spanning segment. Residues 440-446 (QASQGGQ) are Extracellular-facing. A helical transmembrane segment spans residues 447–467 (LFVYIQAISSYLQPPVAMVFV). Topologically, residues 468–479 (LGCFWKRANEKG) are cytoplasmic. The helical transmembrane segment at 480 to 500 (AFWGLVLGLLLGFIRLILDFI) threads the bilayer. The Extracellular portion of the chain corresponds to 501–521 (YVEPACHQPDERPSVVKNVHY). Residues 522–542 (LYFSMILSSVTVLTVTVMSLL) form a helical membrane-spanning segment. Residues 543–653 (TEPPSKEMIS…SIEENPVVKT (111 aa)) lie on the Cytoplasmic side of the membrane. A helical membrane pass occupies residues 654–674 (LLDVNCLLCICCAFFLWGYFA).

Belongs to the sodium:solute symporter (SSF) (TC 2.A.21) family. In terms of tissue distribution, expressed in brain, lung and kidney. In the kidney, strongly expressed in the cortex, at the luminal side of proximal convoluted tubules and in BBMVs. Weaker expression observed in the medulla (at protein level).

The protein resides in the membrane. It localises to the apical cell membrane. The enzyme catalyses myo-inositol(out) + 2 Na(+)(out) = myo-inositol(in) + 2 Na(+)(in). It catalyses the reaction 1D-chiro-inositol(out) + 2 Na(+)(out) = 1D-chiro-inositol(in) + 2 Na(+)(in). It carries out the reaction D-glucose(out) + 2 Na(+)(out) = D-glucose(in) + 2 Na(+)(in). The catalysed reaction is D-xylose(out) + 2 Na(+)(out) = D-xylose(in) + 2 Na(+)(in). With respect to regulation, MI transport activity stimulated five-fold under 24 hour hypertonic shock conditions. MI inward currents were gradually inhibited as increasing amounts of phlorizin were added to the superfusion medium. When sodium is replaced by potassium, MI uptake is dramatically reduced and in the presence of L-fucose or D-chiro-inositol (DCI), the specific accumulation of tracer amounts of MI is also reduced. Functionally, involved in the sodium-dependent cotransport of myo-inositol (MI) with a Na(+):MI stoichiometry of 2:1. Exclusively responsible for apical MI transport and absorption in intestine. Can also transport D-chiro-inositol (DCI) but not L-fucose. Exhibits stereospecific cotransport of both D-glucose and D-xylose. May induce apoptosis through the TNF-alpha, PDCD1 pathway. May play a role in the regulation of MI concentration in serum, involving reabsorption in at least the proximal tubule of the kidney. The sequence is that of Sodium/myo-inositol cotransporter 2 from Oryctolagus cuniculus (Rabbit).